The chain runs to 246 residues: MRHQDVAIIIPSRLSSTRLKQKPLQLIGSITLIERVFKQVNQAGLEHTYVATDSEEIASVITKVGGKVIFTDSAIPTGTNRTYEAFKLIPNNQNINYIVNVQGDMPFIEPSSILKIIEYLKNSKYDIVTPIVKVDRESVKASSNVTVAVDSAGTALYFSRSLIPNGAEEFLYHVGMYGFRKNALEKFVSLKPTFLEKTERLEQLRVLENGMTIGTCLVENVPISVDTEEDLKKAVKFYENISKLGL.

Belongs to the KdsB family.

The protein localises to the cytoplasm. The enzyme catalyses 3-deoxy-alpha-D-manno-oct-2-ulosonate + CTP = CMP-3-deoxy-beta-D-manno-octulosonate + diphosphate. It functions in the pathway nucleotide-sugar biosynthesis; CMP-3-deoxy-D-manno-octulosonate biosynthesis; CMP-3-deoxy-D-manno-octulosonate from 3-deoxy-D-manno-octulosonate and CTP: step 1/1. It participates in bacterial outer membrane biogenesis; lipopolysaccharide biosynthesis. Its function is as follows. Activates KDO (a required 8-carbon sugar) for incorporation into bacterial lipopolysaccharide in Gram-negative bacteria. The protein is 3-deoxy-manno-octulosonate cytidylyltransferase of Rickettsia peacockii (strain Rustic).